A 303-amino-acid chain; its full sequence is Methionyl-tRNA formyltransferase (303 aa).

111–114 (SLLP) contributes to the (6S)-5,6,7,8-tetrahydrofolate binding site.

This sequence belongs to the Fmt family.

The enzyme catalyses L-methionyl-tRNA(fMet) + (6R)-10-formyltetrahydrofolate = N-formyl-L-methionyl-tRNA(fMet) + (6S)-5,6,7,8-tetrahydrofolate + H(+). Functionally, attaches a formyl group to the free amino group of methionyl-tRNA(fMet). The formyl group appears to play a dual role in the initiator identity of N-formylmethionyl-tRNA by promoting its recognition by IF2 and preventing the misappropriation of this tRNA by the elongation apparatus. The polypeptide is Methionyl-tRNA formyltransferase (Ehrlichia canis (strain Jake)).